Reading from the N-terminus, the 575-residue chain is MSLLAYTNLLLQNGRIFRYYKKANIKKFIKKIIKLDLKSTPSEASVSRQTFLSTGLNSVKNAVQLQARKLLINNVLERVTPTLNSDLKKKAAKRLFYGDSAPFFALVGVSLASGSGLLTKDDELEGICWEIREAVSKGKWNDSESENVEQLQAANLDELDLGEPIAKGCNAVVYSAKLKNVQSNKLAHQLAVKMMFNYDVESNSTAILKAMYRETVPAMSYFFNQNLFNIENISDFKIRLPPHPNIVRMYSVFADRIPDLQCNKQLYPEALPPRINPEGSGRNMSLFLVMKRYDCTLKEYLRDKTPNMRSSILLLSQLLEAVAHMNIHNISHRDLKSDNILVDLSEGDAYPTIVITDFGCCLCDKQNGLVIPYRSEDQDKGGNRALMAPEIANAKPGTFSWLNYKKSDLWAVGAIAYEIFNIDNPFYDKTMKLLSKSYKEEDLPELPDTIPFIIRNLVSNMLSRSTNKRLDCDVAATVAQLYLWAPSSWLKENYTLPNSNEIIQWLLCLSSKVLCERDITARNKTNTMSESVSKAQYKGRRSLPEYELIASFLRRVRLHLVRKGLKWIQELHIYN.

A mitochondrion-targeting transit peptide spans Met-1–Phe-51. Over Leu-52–Arg-94 the chain is Mitochondrial intermembrane. The helical transmembrane segment at Leu-95–Leu-118 threads the bilayer. At Thr-119 to Asn-575 the chain is on the cytoplasmic side. Lys-193 contributes to the ATP binding site. Phosphoserine; by autocatalysis is present on residues Ser-202 and Ser-204. Glu-214 provides a ligand contact to Mg(2+). Thr-305 carries the post-translational modification Phosphothreonine; by autocatalysis. Residue Asp-334 is the Proton acceptor of the active site. 2 residues coordinate Mg(2+): Asn-339 and Asp-357.

The protein belongs to the protein kinase superfamily. Ser/Thr protein kinase family. It depends on Mg(2+) as a cofactor. Post-translationally, proteolytically cleaved. In healthy cells, the precursor is continuously imported into mitochondria where it is proteolytically cleaved into its short form by the mitochondrial rhomboid protease rho-7 (8231301). The short form is then released into the cytosol where it rapidly undergoes proteasome-dependent degradation. In unhealthy cells, when cellular stress conditions lead to the loss of mitochondrial membrane potential, mitochondrial import is impaired leading to the precursor accumulating on the outer mitochondrial membrane (OMM). In terms of processing, autophosphorylated. Autophosphorylated on Ser-202, which activates kinase activity. Loss of mitochondrial membrane potential results in the precursor accumulating on the outer mitochondrial membrane (OMM) where it is activated by autophosphorylation at Ser-202. Autophosphorylation is sufficient and essential for selective recruitment of park to depolarized mitochondria, likely via Pink1-dependent phosphorylation of polyubiquitin chains. Also autophosphorylated at Ser-204 and Thr-305.

The protein resides in the mitochondrion outer membrane. It localises to the mitochondrion inner membrane. The protein localises to the cytoplasm. Its subcellular location is the cytosol. The enzyme catalyses L-seryl-[protein] + ATP = O-phospho-L-seryl-[protein] + ADP + H(+). It catalyses the reaction L-threonyl-[protein] + ATP = O-phospho-L-threonyl-[protein] + ADP + H(+). Functionally, acts as a serine/threonine-protein kinase. Exhibits a substrate preference for proline at position P+1 and a general preference at several residues for basic residues such as arginine. Also exhibits moderate preferences for a phosphotyrosine at position P-3 and a tryptophan at P-5. Critical to mitochondrial homeostasis it mediates several pathways that maintain mitochondrial health and function Protects against mitochondrial dysfunction during cellular stress by phosphorylating mitochondrial proteins such as park and likely Drp1, to coordinate mitochondrial quality control mechanisms that remove and replace dysfunctional mitochondrial components. Depending on the severity of mitochondrial damage and/or dysfunction, activity ranges from preventing apoptosis and stimulating mitochondrial biogenesis to regulating mitochondrial dynamics and eliminating severely damaged mitochondria via mitophagy. Appears to be particularly important in maintaining the physiology and function of cells with high energy demands that are undergoing stress or altered metabolic environment, including spermatids, muscle cells and neurons such as the dopaminergic (DA) neurons. Mediates the translocation and activation of park at the outer membrane (OMM) of dysfunctional/depolarized mitochondria. At the OMM of damaged mitochondria, phosphorylates pre-existing polyubiquitin chains, the Pink1-phosphorylated polyubiquitin then recruits park from the cytosol to the OMM where park is fully activated by phosphorylation at 'Ser-94' by Pink1. When cellular stress results in irreversible mitochondrial damage, functions with park to promote the clearance of dysfunctional and/or depolarized mitochondria by selective autophagy (mitophagy). The Pink1-park pathway also promotes fission and/or inhibits fusion of damaged mitochondria, by phosphorylating and thus promoting the park-dependent degradation of proteins involved in mitochondrial fusion/fission such as Marf, Opa1 and fzo. This prevents the refusion of unhealthy mitochondria with the mitochondrial network or initiates mitochondrial fragmentation facilitating their later engulfment by autophagosomes. Also likely to promote mitochondrial fission independently of park and Atg7-mediated mitophagy, via the phosphorylation and activation of Drp1. Regulates motility of damaged mitochondria by phosphorylating Miro which likely promotes its park-dependent degradation by the proteasome; in motor neurons, this inhibits mitochondrial intracellular anterograde transport along the axons which probably increases the chance of the mitochondria being eliminated in the soma. The Pink1-park pathway is also involved in mitochondrial regeneration processes such as promoting mitochondrial biogenesis, activating localized mitochondrial repair, promoting selective turnover of mitochondrial proteins and initiating the mitochondrial import of endogenous proteins. Involved in mitochondrial biogenesis by promoting the park-dependent ubiquitination of transcriptional repressor Paris which leads to its subsequent proteasomal degradation and allows activation of the transcription factor srl. Functions with park to promote localized mitochondrial repair by activating the translation of specific nuclear-encoded mitochondrial RNAs (nc-mtRNAs) on the mitochondrial surface, including several key electron transport chain component nc-mtRNAs. During oogenesis, phosphorylates and inactivates larp on the membrane of defective mitochondria, thus impairing local translation and mtDNA replication and consequently, reducing transmission of deleterious mtDNA mutations to the mature oocyte. Phosphorylates the mitochondrial acyl-CoA dehydrogenase Mcad, and appears to be important for maintaining fatty acid and amino acid metabolism via a mechanism that is independent of it's role in maintaining production of ATP. The protein is Serine/threonine-protein kinase Pink1, mitochondrial of Pediculus humanus subsp. corporis (Body louse).